Here is a 522-residue protein sequence, read N- to C-terminus: Zinc finger protein STOP1 homolog (522 aa).

Polar residues-rich tracts occupy residues 1-12 (MDSGLGRSSETS) and 19-40 (MASN…SSMD). Disordered regions lie at residues 1 to 43 (MDSG…DQPP) and 234 to 260 (CGGE…EREN). The segment covering 244–260 (MEDHDVKESDDGGEREN) has biased composition (basic and acidic residues). A C2H2-type 1 zinc finger spans residues 282 to 304 (HFCLICGKGFKRDANLRMHMRGH). The segment at 390–421 (KHCGRDKWLCSCGTTFSRKDKLFGHVALFQGH) adopts a C2H2-type 2; atypical zinc-finger fold.

The protein resides in the nucleus. Its function is as follows. Probable transcription factor that may be involved in aluminum tolerance. This Oryza sativa subsp. japonica (Rice) protein is Zinc finger protein STOP1 homolog.